We begin with the raw amino-acid sequence, 424 residues long: Histidine--tRNA ligase (424 aa).

It belongs to the class-II aminoacyl-tRNA synthetase family. Homodimer.

It localises to the cytoplasm. It carries out the reaction tRNA(His) + L-histidine + ATP = L-histidyl-tRNA(His) + AMP + diphosphate + H(+). This is Histidine--tRNA ligase (hisS) from Bacillus subtilis (strain 168).